We begin with the raw amino-acid sequence, 334 residues long: tRNA uridine(34) hydroxylase (334 aa).

The region spanning 123–217 (SDPDVILVDT…YLEEVKQEES (95 aa)) is the Rhodanese domain. The active-site Cysteine persulfide intermediate is C177.

It belongs to the TrhO family.

The catalysed reaction is uridine(34) in tRNA + AH2 + O2 = 5-hydroxyuridine(34) in tRNA + A + H2O. Its function is as follows. Catalyzes oxygen-dependent 5-hydroxyuridine (ho5U) modification at position 34 in tRNAs. The polypeptide is tRNA uridine(34) hydroxylase (Shewanella putrefaciens (strain CN-32 / ATCC BAA-453)).